The following is a 663-amino-acid chain: MIDKRDFKAFKLVSKYAPSGDQPQAIETLVDNIEGGEKAQILLGATGTGKTYTMSQVISKVNKPTLVVAHNKTLAGQLYGEFKEFFPENAVEYFVSYYDYYQPEAYVPSSDTYIEKDSSVNDEIDKLRHSATSSLLERNDVIVVASVSCIYGLGSPKEYADSAVSLRPGQEISRDQLLNALVDIQFERNDIDFQRGRFRVRGDVVEVFPASRDEHAFRIEFFGDEIDRIREIESLTGKVLGDADHLVLFPATHFVTNDEHMEQSISKIQAELADQLKLFEAEGKLLEAQRLRQRTEYDIEMLREMGYTNGVENYSRHMDGRSAGEPPYTLLDFFPDDFLIMIDESHMTMGQIKGMYNGDKARKQMLVDYGFRLPSALDNRPLRREEFESHVHQIVYVSATPGDYEMEQTDTIVEQIIRPTGLLDPEVEVRPSMGQMDDLLGEINLRVERGERTFITTLTKKMAEDLTDYLKEMGVKVKYMHSDIKTLERTEIIRDLRLGVFDVLIGINLLREGIDVPEVSLVAILDADKEGFLRNERGLIQTIGRAARNADGHVIMYADRMTDSMQRAIDETARRRAIQMAYNEEHGIIPQTIKKDIRDLISISRAVEAKATEAETNYESMTRSERQEAIKQLQKNMQEAAELLDFELAAQLRDLILELKAMD.

Positions 31–271 (DNIEGGEKAQ…EQSISKIQAE (241 aa)) constitute a Helicase ATP-binding domain. Residue 44–51 (GATGTGKT) participates in ATP binding. Positions 97 to 120 (YYDYYQPEAYVPSSDTYIEKDSSV) match the Beta-hairpin motif. Residues 435-601 (QMDDLLGEIN…TIKKDIRDLI (167 aa)) form the Helicase C-terminal domain. Residues 627–662 (QEAIKQLQKNMQEAAELLDFELAAQLRDLILELKAM) enclose the UVR domain.

Belongs to the UvrB family. Forms a heterotetramer with UvrA during the search for lesions. Interacts with UvrC in an incision complex.

It localises to the cytoplasm. Functionally, the UvrABC repair system catalyzes the recognition and processing of DNA lesions. A damage recognition complex composed of 2 UvrA and 2 UvrB subunits scans DNA for abnormalities. Upon binding of the UvrA(2)B(2) complex to a putative damaged site, the DNA wraps around one UvrB monomer. DNA wrap is dependent on ATP binding by UvrB and probably causes local melting of the DNA helix, facilitating insertion of UvrB beta-hairpin between the DNA strands. Then UvrB probes one DNA strand for the presence of a lesion. If a lesion is found the UvrA subunits dissociate and the UvrB-DNA preincision complex is formed. This complex is subsequently bound by UvrC and the second UvrB is released. If no lesion is found, the DNA wraps around the other UvrB subunit that will check the other stand for damage. This is UvrABC system protein B from Streptococcus equi subsp. equi (strain 4047).